Here is a 905-residue protein sequence, read N- to C-terminus: DNA mismatch repair protein MutS (905 aa).

The interval 272 to 292 (KKPPLSPPSREATGSTMAIDP) is disordered. 654–661 (GPNMAGKS) serves as a coordination point for ATP.

This sequence belongs to the DNA mismatch repair MutS family.

Its function is as follows. This protein is involved in the repair of mismatches in DNA. It is possible that it carries out the mismatch recognition step. This protein has a weak ATPase activity. The chain is DNA mismatch repair protein MutS from Rhodopseudomonas palustris (strain BisB18).